We begin with the raw amino-acid sequence, 328 residues long: MTAPVERRVRVAAIQAEPVWNDLQGGVNKVISLLGDVGKEGANVVGFPEVFIPGYPWSIFTATPLDNAPFMEEYFHNSLAVDSDEMRRIQAAVKENGTFCVLGFSERYQGSLYISQVFINTDGQIVHHRRKTKPTHVERAYWGTGEGDSLKCVVDSPFGRIGGLNCWEHTQPLLRYYEYQQDVDIHVASWPVLWDRPESVGSRWPYFITGDMSSRLSQVMAFEGTCFVLVCTQVMSEENFDKNKVRDVEHIQGTGGGFSAIFGPGGEPIATMPSDKEGILYANVDVNDKLRAKQWLDVVGHYSRPDLLSLRVNTHPSKPVFFAEEPEK.

The CN hydrolase domain occupies 9-286; sequence VRVAAIQAEP…EGILYANVDV (278 aa). The active-site Proton acceptor is glutamate 49. Residue lysine 131 is part of the active site. The active-site Nucleophile is the cysteine 166.

This sequence belongs to the carbon-nitrogen hydrolase superfamily. Nitrilase family.

It catalyses the reaction a nitrile + 2 H2O = a carboxylate + NH4(+). Functionally, nitrilase that hydrolyzes preferentially 4-cyanopyridine. Is also able to hydrolyze some aliphatic nitriles, such as (R,S)-mandelonitrile. The protein is Nitrilase of Penicillium rubens (strain ATCC 28089 / DSM 1075 / NRRL 1951 / Wisconsin 54-1255) (Penicillium chrysogenum).